We begin with the raw amino-acid sequence, 98 residues long: Integration host factor subunit beta (98 aa).

The protein belongs to the bacterial histone-like protein family. Heterodimer of an alpha and a beta chain.

This protein is one of the two subunits of integration host factor, a specific DNA-binding protein that functions in genetic recombination as well as in transcriptional and translational control. The polypeptide is Integration host factor subunit beta (Pseudomonas putida (strain W619)).